We begin with the raw amino-acid sequence, 453 residues long: Bifunctional protein GlmU (453 aa).

Residues 1 to 225 (MNIVILAAGT…EWETLGVNSK (225 aa)) are pyrophosphorylase. Residues 6 to 9 (LAAG), Lys-20, Gln-71, 76 to 77 (GT), 98 to 100 (YGD), Gly-135, Glu-150, Asn-165, and Asn-223 each bind UDP-N-acetyl-alpha-D-glucosamine. Position 100 (Asp-100) interacts with Mg(2+). Asn-223 contributes to the Mg(2+) binding site. The interval 226–246 (AQLAELERIHQRNIAEALLVD) is linker. The interval 247–453 (GVTLADPARL…GYVRPVKKKS (207 aa)) is N-acetyltransferase. Arg-329 and Lys-347 together coordinate UDP-N-acetyl-alpha-D-glucosamine. His-359 functions as the Proton acceptor in the catalytic mechanism. 2 residues coordinate UDP-N-acetyl-alpha-D-glucosamine: Tyr-362 and Asn-373. Acetyl-CoA-binding positions include Ala-376, 382–383 (NY), Ser-401, and Ala-419.

In the N-terminal section; belongs to the N-acetylglucosamine-1-phosphate uridyltransferase family. It in the C-terminal section; belongs to the transferase hexapeptide repeat family. In terms of assembly, homotrimer. It depends on Mg(2+) as a cofactor.

The protein resides in the cytoplasm. It carries out the reaction alpha-D-glucosamine 1-phosphate + acetyl-CoA = N-acetyl-alpha-D-glucosamine 1-phosphate + CoA + H(+). The catalysed reaction is N-acetyl-alpha-D-glucosamine 1-phosphate + UTP + H(+) = UDP-N-acetyl-alpha-D-glucosamine + diphosphate. It functions in the pathway nucleotide-sugar biosynthesis; UDP-N-acetyl-alpha-D-glucosamine biosynthesis; N-acetyl-alpha-D-glucosamine 1-phosphate from alpha-D-glucosamine 6-phosphate (route II): step 2/2. Its pathway is nucleotide-sugar biosynthesis; UDP-N-acetyl-alpha-D-glucosamine biosynthesis; UDP-N-acetyl-alpha-D-glucosamine from N-acetyl-alpha-D-glucosamine 1-phosphate: step 1/1. The protein operates within bacterial outer membrane biogenesis; LPS lipid A biosynthesis. Functionally, catalyzes the last two sequential reactions in the de novo biosynthetic pathway for UDP-N-acetylglucosamine (UDP-GlcNAc). The C-terminal domain catalyzes the transfer of acetyl group from acetyl coenzyme A to glucosamine-1-phosphate (GlcN-1-P) to produce N-acetylglucosamine-1-phosphate (GlcNAc-1-P), which is converted into UDP-GlcNAc by the transfer of uridine 5-monophosphate (from uridine 5-triphosphate), a reaction catalyzed by the N-terminal domain. This chain is Bifunctional protein GlmU, found in Burkholderia lata (strain ATCC 17760 / DSM 23089 / LMG 22485 / NCIMB 9086 / R18194 / 383).